The chain runs to 209 residues: Dual specificity phosphatase 29 (209 aa).

Positions 45–193 constitute a Tyrosine-protein phosphatase domain; the sequence is HVNEVWPNLY…LRELDIKLAL (149 aa). 137-144 provides a ligand contact to substrate; sequence NCAMGRSR. Residue Cys-138 is the Phosphocysteine intermediate of the active site.

This sequence belongs to the protein-tyrosine phosphatase family. Non-receptor class dual specificity subfamily.

It is found in the cytoplasm. The protein resides in the nucleus. The enzyme catalyses O-phospho-L-tyrosyl-[protein] + H2O = L-tyrosyl-[protein] + phosphate. It catalyses the reaction O-phospho-L-seryl-[protein] + H2O = L-seryl-[protein] + phosphate. It carries out the reaction O-phospho-L-threonyl-[protein] + H2O = L-threonyl-[protein] + phosphate. In terms of biological role, dual specificity phosphatase able to dephosphorylate phosphotyrosine, phosphoserine and phosphothreonine residues, with a preference for phosphotyrosine as a substrate. Dual specificity phosphatase able to dephosphorylate phosphotyrosine, phosphoserine and phosphothreonine residues within the same substrate, with a preference for phosphotyrosine as a substrate. Involved in the modulation of AMPK and MAPK1/2 signaling pathway. This is Dual specificity phosphatase 29 (dusp29) from Xenopus laevis (African clawed frog).